The sequence spans 277 residues: Putative pyruvate, phosphate dikinase regulatory protein (277 aa).

Residue 151–158 (GISRTSKT) participates in ADP binding.

Belongs to the pyruvate, phosphate/water dikinase regulatory protein family. PDRP subfamily.

It catalyses the reaction N(tele)-phospho-L-histidyl/L-threonyl-[pyruvate, phosphate dikinase] + ADP = N(tele)-phospho-L-histidyl/O-phospho-L-threonyl-[pyruvate, phosphate dikinase] + AMP + H(+). The enzyme catalyses N(tele)-phospho-L-histidyl/O-phospho-L-threonyl-[pyruvate, phosphate dikinase] + phosphate + H(+) = N(tele)-phospho-L-histidyl/L-threonyl-[pyruvate, phosphate dikinase] + diphosphate. Bifunctional serine/threonine kinase and phosphorylase involved in the regulation of the pyruvate, phosphate dikinase (PPDK) by catalyzing its phosphorylation/dephosphorylation. The sequence is that of Putative pyruvate, phosphate dikinase regulatory protein from Alkaliphilus metalliredigens (strain QYMF).